The chain runs to 674 residues: Membrane-anchored lipid-binding protein LAM5 (674 aa).

Disordered stretches follow at residues 1–52 and 65–151; these read MSDV…LNTE and NQSA…GSPL. At 1 to 633 the chain is on the cytoplasmic side; it reads MSDVDNWEPV…AEQQGLKVTM (633 aa). Positions 69–81 are enriched in basic and acidic residues; it reads ADEHPTEIKHDQS. Residues 82–119 are compositionally biased toward low complexity; it reads RTSSTSSFFSGMISSFKSNVPSPVSRSTTPTSPVSQPS. At Thr-110 the chain carries Phosphothreonine. A phosphoserine mark is found at Ser-113 and Ser-140. A Phosphothreonine modification is found at Thr-143. Phosphoserine is present on Ser-149. In terms of domain architecture, GRAM spans 198–264; the sequence is KDFHETFKSV…FEDVTFMEKT (67 aa). The span at 336–357 shows a compositional bias: acidic residues; that stretch reads IDEENNDKDANDNDTNENDDEN. Positions 336–380 are disordered; sequence IDEENNDKDANDNDTNENDDENISTNETTPNSTSSSPDKEKEKAY. The segment covering 358-371 has biased composition (low complexity); that stretch reads ISTNETTPNSTSSS. Residues 409 to 582 form the VASt domain; that stretch reads NEFVLKELPF…ILSKFIKNNV (174 aa). Residues 634 to 654 form a helical membrane-spanning segment; it reads ETWLFLYLIVVVLLLFNLFYI. Residues 655-674 are Lumenal-facing; it reads RSIAVSLHQLVKLQLVELKL.

It belongs to the YSP2 family.

The protein localises to the endoplasmic reticulum membrane. In terms of biological role, may be involved in sterol transfer between intracellular membranes. The polypeptide is Membrane-anchored lipid-binding protein LAM5 (Saccharomyces cerevisiae (strain ATCC 204508 / S288c) (Baker's yeast)).